The chain runs to 427 residues: Flotillin-1 (427 aa).

A phosphoserine mark is found at serine 19, serine 163, and serine 385. Threonine 387 carries the phosphothreonine modification.

This sequence belongs to the band 7/mec-2 family. Flotillin subfamily. In terms of assembly, heterooligomeric complex of flotillin-1 and flotillin-2 and caveolin-1 and caveolin-2. Interacts with ECPAS.

It is found in the cell membrane. The protein resides in the endosome. The protein localises to the membrane. Its subcellular location is the caveola. It localises to the melanosome. It is found in the membrane raft. In terms of biological role, may act as a scaffolding protein within caveolar membranes, functionally participating in formation of caveolae or caveolae-like vesicles. The sequence is that of Flotillin-1 (FLOT1) from Macaca mulatta (Rhesus macaque).